Here is a 179-residue protein sequence, read N- to C-terminus: Oryzines biosynthesis cluster protein J (179 aa).

The Cupin type-2 domain occupies 88–148; sequence YVDYHPGCEP…NHCWRNPSKT (61 aa).

The protein belongs to the oryJ family.

Its pathway is secondary metabolite biosynthesis. Functionally, part of the gene cluster that mediates the biosynthesis of oryzines, natural products with an unusual maleidride backbone. The two subunits of the fungal fatty acid synthase oryfasA and oryfasB probably form octenoic acid. This fatty acid is most likely activated by the acyl-CoA ligase oryP to give octenyl-CoA before the citrate synthase-like protein oryE catalyzes condensation with oxaloacetate to form tricarboxylic acid. The next steps of the pathways are conjectural, but a favorite possible route has been proposed, beginning with decarboxylation and concomitant dehydration by the decarboxylase oryM, followed by tautomerization, which may lead to the production of a diene intermediate. Reduction of this diene intermediate could give the known metabolite piliformic acid. On the pathway to oryzine B and oryzine A, however, hydroxylation of the diene by the alpha-ketoglutarate-dependent dioxygenase oryG and lactonisation by the lactonohydrolases oryH or oryL could give oryzine B directly. Finally, enoyl reduction by the dehydrogenase oryD would then convert oryzine B into oryzine A. This chain is Oryzines biosynthesis cluster protein J, found in Aspergillus oryzae (strain ATCC 42149 / RIB 40) (Yellow koji mold).